The chain runs to 227 residues: Deoxyribose-phosphate aldolase (227 aa).

Aspartate 98 acts as the Proton donor/acceptor in catalysis. Lysine 161 serves as the catalytic Schiff-base intermediate with acetaldehyde. Catalysis depends on lysine 191, which acts as the Proton donor/acceptor.

The protein belongs to the DeoC/FbaB aldolase family. DeoC type 1 subfamily.

The protein localises to the cytoplasm. It carries out the reaction 2-deoxy-D-ribose 5-phosphate = D-glyceraldehyde 3-phosphate + acetaldehyde. Its pathway is carbohydrate degradation; 2-deoxy-D-ribose 1-phosphate degradation; D-glyceraldehyde 3-phosphate and acetaldehyde from 2-deoxy-alpha-D-ribose 1-phosphate: step 2/2. In terms of biological role, catalyzes a reversible aldol reaction between acetaldehyde and D-glyceraldehyde 3-phosphate to generate 2-deoxy-D-ribose 5-phosphate. This Frankia alni (strain DSM 45986 / CECT 9034 / ACN14a) protein is Deoxyribose-phosphate aldolase.